A 524-amino-acid polypeptide reads, in one-letter code: MQLSKSILLAALAATPSLVNAMLPIHIKNYRFIKPSSATNSESDNEVFFVKGVDYQPGGSSGYDADSDTDILSDPEVCARDAYAFQQLGVNTVRIYSLNPDLNHDKCMTIFNNAGIYAILDVNSGNYGESLNRADPSGTYDSLYLSRVFKFIDAFKNYPNVLGFFSGNEVINDQSDYAKIDPPYIRAVQRDMKQYISKHANRSIPVGYSAADNTDLRLATFKYLQCNSLDGNKVNDDLDISKSDFFGLNTYEWCSGTSSWESSGYDKLNSTFEDAVIPLIFSEYGCNKNTPRTFDEVSEGLYGGLKNVFSGGLVYEYTEEANNYGLVKLDDSGSLTYKDDFVNLESQLKNVSLPTTKESEISSDSIYKCDNSAITNIYSGFGTNNFTLPSQPAEIANMIEYGVNGTNTGKILTDYAVPTTFNYTIKNNKDDTISATISYDKANSLNELDVTATTVAKSASTSQSSSRSLTSSTSPSSSTGSSSSTGSSSASSSSKSKGVGNIVNVSFSQSGYLALFAGLISALL.

Positions 1-21 (MQLSKSILLAALAATPSLVNA) are cleaved as a signal peptide. Cysteine 78 and cysteine 107 form a disulfide bridge. Positions 96, 168, and 169 each coordinate (1,3-beta-D-glucosyl)n. Glutamate 169 (proton donor) is an active-site residue. N-linked (GlcNAc...) asparagine glycosylation occurs at asparagine 201. Residues aspartate 212 and arginine 217 each contribute to the (1,3-beta-D-glucosyl)n site. 2 cysteine pairs are disulfide-bonded: cysteine 226-cysteine 369 and cysteine 254-cysteine 286. A glycan (N-linked (GlcNAc...) asparagine) is linked at asparagine 269. The active-site Nucleophile is the glutamate 283. Tyrosine 315 contacts (1,3-beta-D-glucosyl)n. N-linked (GlcNAc...) asparagine glycans are attached at residues asparagine 350, asparagine 385, asparagine 404, and asparagine 422. Residues 461–498 (TSQSSSRSLTSSTSPSSSTGSSSSTGSSSASSSSKSKG) are disordered. Glycine 498 carries the GPI-anchor amidated glycine lipid modification. Residues 499 to 524 (VGNIVNVSFSQSGYLALFAGLISALL) constitute a propeptide, removed in mature form.

This sequence belongs to the glycosyl hydrolase 72 family. The GPI-anchor is attached to the protein in the endoplasmic reticulum and serves to target the protein to the cell surface. There, the glucosamine-inositol phospholipid moiety is cleaved off and the GPI-modified mannoprotein is covalently attached via its lipidless GPI glycan remnant to the 1,6-beta-glucan of the outer cell wall layer. Post-translationally, N-glycosylated.

It is found in the secreted. Its subcellular location is the cell wall. The protein resides in the membrane. Functionally, splits internally a 1,3-beta-glucan molecule and transfers the newly generated reducing end (the donor) to the non-reducing end of another 1,3-beta-glucan molecule (the acceptor) forming a 1,3-beta linkage, resulting in the elongation of 1,3-beta-glucan chains in the cell wall. Involved in cell wall biosynthesis and morphogenesis. In Saccharomyces cerevisiae (strain ATCC 204508 / S288c) (Baker's yeast), this protein is Probable 1,3-beta-glucanosyltransferase GAS3 (GAS3).